The following is a 120-amino-acid chain: NAD(P)H-quinone oxidoreductase subunit 3, chloroplastic (120 aa).

The next 3 helical transmembrane spans lie at 9–29 (IFWA…LISG), 64–84 (MFAL…PWAM), and 88–108 (VLGV…ILGL).

Belongs to the complex I subunit 3 family. In terms of assembly, NDH is composed of at least 16 different subunits, 5 of which are encoded in the nucleus.

It localises to the plastid. The protein resides in the chloroplast thylakoid membrane. The enzyme catalyses a plastoquinone + NADH + (n+1) H(+)(in) = a plastoquinol + NAD(+) + n H(+)(out). It carries out the reaction a plastoquinone + NADPH + (n+1) H(+)(in) = a plastoquinol + NADP(+) + n H(+)(out). In terms of biological role, NDH shuttles electrons from NAD(P)H:plastoquinone, via FMN and iron-sulfur (Fe-S) centers, to quinones in the photosynthetic chain and possibly in a chloroplast respiratory chain. The immediate electron acceptor for the enzyme in this species is believed to be plastoquinone. Couples the redox reaction to proton translocation, and thus conserves the redox energy in a proton gradient. In Capsella bursa-pastoris (Shepherd's purse), this protein is NAD(P)H-quinone oxidoreductase subunit 3, chloroplastic.